The chain runs to 815 residues: ABC transporter G family member 7 (815 aa).

Disordered stretches follow at residues 81–141 and 177–249; these read NNID…TPNF and KQIK…TNGK. A coiled-coil region spans residues 164 to 199; the sequence is ENISYKTENRNYKKQIKDEKKRKKKLEMERSNSSNS. The segment covering 194 to 210 has biased composition (low complexity); sequence SNSSNSNSSYDVESSAS. Residues 211–248 show a composition bias toward polar residues; the sequence is GLQTPQQSRSSILPTNSLNISKIDQSMNPQQTRSTTNG. Residues 242-485 enclose the ABC transporter domain; the sequence is TRSTTNGKIE…SLPNQYQCPN (244 aa). 274-281 lines the ATP pocket; sequence GPSGSGKS. The region spanning 562–810 is the ABC transmembrane type-2 domain; sequence TQYITRLSGG…VSGYWAISKL (249 aa). The next 7 helical transmembrane spans lie at 568-588, 598-618, 647-667, 675-695, 706-726, 732-752, and 788-808; these read LSGG…LSPS, ILFF…TLFL, AFIQ…INHL, FITY…IIAI, FIYG…LVPV, SFGW…VMVA, and GIGI…WAIS.

It belongs to the ABC transporter superfamily. ABCG family.

It is found in the membrane. This is ABC transporter G family member 7 (abcG7) from Dictyostelium discoideum (Social amoeba).